A 200-amino-acid chain; its full sequence is Small ribosomal subunit protein uS4 (200 aa).

The interval 22 to 42 (TGKELQKRPYPPGQHGPGQRR) is disordered. The S4 RNA-binding domain maps to 92-152 (SRLDNLVYRL…EKSRNLQVIK (61 aa)).

Belongs to the universal ribosomal protein uS4 family. In terms of assembly, part of the 30S ribosomal subunit. Contacts protein S5. The interaction surface between S4 and S5 is involved in control of translational fidelity.

One of the primary rRNA binding proteins, it binds directly to 16S rRNA where it nucleates assembly of the body of the 30S subunit. Its function is as follows. With S5 and S12 plays an important role in translational accuracy. The sequence is that of Small ribosomal subunit protein uS4 (rpsD) from Geobacillus stearothermophilus (Bacillus stearothermophilus).